The chain runs to 1025 residues: Multidrug resistance protein MdtC (1025 aa).

The next 12 membrane-spanning stretches (helical) occupy residues 3–23, 333–353, 360–380, 387–407, 431–451, 463–483, 528–548, 853–873, 875–895, 897–917, 953–973, and 984–1004; these read FFAL…AITL, EVEQ…FLFL, IIPA…MYLC, LSLM…IVVL, VGFT…PLLL, FAVT…TLTP, LVGV…ISIP, VILI…LYES, VHPL…LLAL, LFNA…IGIV, PIMM…LSGG, and ITIV…TPVV.

This sequence belongs to the resistance-nodulation-cell division (RND) (TC 2.A.6) family. MdtC subfamily. Part of a tripartite efflux system composed of MdtA, MdtB and MdtC. MdtC forms a heteromultimer with MdtB.

The protein localises to the cell inner membrane. In terms of biological role, the MdtABC tripartite complex confers resistance against novobiocin and deoxycholate. This Escherichia coli O17:K52:H18 (strain UMN026 / ExPEC) protein is Multidrug resistance protein MdtC.